We begin with the raw amino-acid sequence, 420 residues long: Serine hydroxymethyltransferase (420 aa).

Residues Leu121 and 125–127 (GHL) each bind (6S)-5,6,7,8-tetrahydrofolate. Lys230 bears the N6-(pyridoxal phosphate)lysine mark. (6S)-5,6,7,8-tetrahydrofolate-binding positions include Glu246 and 354–356 (SPF).

This sequence belongs to the SHMT family. As to quaternary structure, homodimer. Requires pyridoxal 5'-phosphate as cofactor.

It localises to the cytoplasm. The catalysed reaction is (6R)-5,10-methylene-5,6,7,8-tetrahydrofolate + glycine + H2O = (6S)-5,6,7,8-tetrahydrofolate + L-serine. Its pathway is one-carbon metabolism; tetrahydrofolate interconversion. It functions in the pathway amino-acid biosynthesis; glycine biosynthesis; glycine from L-serine: step 1/1. In terms of biological role, catalyzes the reversible interconversion of serine and glycine with tetrahydrofolate (THF) serving as the one-carbon carrier. This reaction serves as the major source of one-carbon groups required for the biosynthesis of purines, thymidylate, methionine, and other important biomolecules. Also exhibits THF-independent aldolase activity toward beta-hydroxyamino acids, producing glycine and aldehydes, via a retro-aldol mechanism. The polypeptide is Serine hydroxymethyltransferase (Rickettsia canadensis (strain McKiel)).